A 293-amino-acid polypeptide reads, in one-letter code: Short-chain dehydrogenase/reductase PhomF (293 aa).

I31 and N102 together coordinate NADP(+). The active-site Proton donor is S175. NADP(+)-binding residues include Y190, K194, and S225. Catalysis depends on Y190, which acts as the Proton acceptor. K194 (lowers pKa of active site Tyr) is an active-site residue.

The protein belongs to the short-chain dehydrogenases/reductases (SDR) family.

Functionally, short-chain dehydrogenase/reductase; part of the gene cluster that mediates the biosynthesis of the phomopsins, a group of hexapeptide mycotoxins which infects lupins and causes lupinosis disease in livestock. The role of phomF within the phomopsins biosynthesis pathway has still to be determined. The pathway starts with the processing of the precursor phomA by several endopeptidases including kexin proteases as well as the cluster-specific S41 family peptidase phomP1 and the oligopeptidase phomG to produce 10 identical copies of the hexapeptide Tyr-Val-Ile-Pro-Ile-Asp. After being excised from the precursor peptide, the core peptides are cyclized and modified post-translationally by enzymes encoded within the gene cluster. The timing and order of proteolysis of the phomA precursor and PTMs are still unknown. Two tyrosinase-like enzymes, phomQ1 and phomQ2, catalyze the chlorination and hydroxylation of Tyr, respectively. PhomYb, is proposed to be involved in the construction of the macrocyclic structure. The other 4 ustYa family proteins may be involved in PTMs that generate the unique structure of phomopsin A. PhomYa is required for the hydroxylation of C-beta of Tyr. PhomYc, phomYd, and phomYe are responsible for the biosynthesis of 2,3-dehydroisoleucine (dIle), 2,3-dehydroaspartic acid (dAsp), and 3,4-dehydroproline (dPro), respectively. While dIle formation by phomYc is indispensable for the installation of dAsp by phomYd, the order of the other PTMs have not been elucidated yet. Most of the biosynthetic enzymes likely have broad substrate specificity, and thus, there might be a metabolic grid from a precursor to phomopsin A. The enzyme(s) responsible for the biosynthesis of 3,4-dehydrovaline (dVal) have also not been identified yet. Finally, phomM acts as an S-adenosylmethionine-dependent alpha-N-methyltransferase that catalyzes two successive N-methylation reactions, converting N-desmethyl-phomopsin A to phomopsin A and phomopsin A further to an N,N-dimethylated congener called phomopsin E. The polypeptide is Short-chain dehydrogenase/reductase PhomF (Diaporthe leptostromiformis (Lupinosis disease fungus)).